The following is a 241-amino-acid chain: Small ribosomal subunit protein bS6 (241 aa).

A compositionally biased stretch (basic residues) spans 97-108 (KPKIRERNRKYT). 2 disordered regions span residues 97–187 (KPKI…HREN) and 199–241 (NKNH…QSSN). Positions 109-118 (PRRDRFDKPN) are enriched in basic and acidic residues. Composition is skewed to low complexity over residues 130 to 151 (QDQQ…QTSQ), 161 to 180 (DDFQ…QQNQ), and 199 to 210 (NKNHQNQTSQTQ).

It belongs to the bacterial ribosomal protein bS6 family.

Binds together with bS18 to 16S ribosomal RNA. This is Small ribosomal subunit protein bS6 from Mesomycoplasma hyopneumoniae (strain 7448) (Mycoplasma hyopneumoniae).